The following is a 504-amino-acid chain: Putative glycerol-3-phosphate transporter 2 (504 aa).

The next 12 helical transmembrane spans lie at 31-51 (LSFK…YIAF), 84-104 (ALLG…MFVA), 116-136 (FLTI…VAFW), 145-165 (FLAV…CIVA), 178-198 (MIMG…SLIA), 210-230 (FLGP…FLPV), 280-302 (IPGV…TFLY), 324-344 (GNLS…AGYI), 352-372 (AITA…YRVF), 378-398 (TINV…FALI), 424-444 (AIID…TGYI), and 452-472 (VFYM…KLII).

The protein belongs to the major facilitator superfamily. Organophosphate:Pi antiporter (OPA) (TC 2.A.1.4) family. In terms of tissue distribution, expressed in the root-hair differentiation zone.

It is found in the membrane. This chain is Putative glycerol-3-phosphate transporter 2, found in Arabidopsis thaliana (Mouse-ear cress).